The chain runs to 294 residues: MPWIQVKLNATSENAEQIGDMLMEETGALSITFLDAKDTPVFEPLPGETRLWGETDILALYDAEADMDFVITQLKASRLLEEGFAHKIEQLEDKDWEREWMDNFHPMQFGKRLWICPSWREIPEPDAVNVMLDPGLAFGTGTHPTTSLCLEWLEGLDLEGKTVVDFGCGSGILAIAAIKLGAAKVIGIDIDPQAILASKDNATRNGVADQIELYLPQDQPEGLIADVVVANILAGPLRELSGIITSLVKPQGQLAMSGVLDTQAEDVASYYAEQFDLDAIVEQQEWCRISGKKK.

Residues threonine 146, glycine 167, aspartate 189, and asparagine 231 each contribute to the S-adenosyl-L-methionine site.

This sequence belongs to the methyltransferase superfamily. PrmA family.

Its subcellular location is the cytoplasm. It catalyses the reaction L-lysyl-[protein] + 3 S-adenosyl-L-methionine = N(6),N(6),N(6)-trimethyl-L-lysyl-[protein] + 3 S-adenosyl-L-homocysteine + 3 H(+). Methylates ribosomal protein L11. The chain is Ribosomal protein L11 methyltransferase from Aliivibrio fischeri (strain ATCC 700601 / ES114) (Vibrio fischeri).